We begin with the raw amino-acid sequence, 328 residues long: Gonadotropin-releasing hormone receptor (328 aa).

Over 1-38 the chain is Extracellular; the sequence is MANGDSPDQNENHCSAINSSILLTPGSLPTLTLSGKIR. Asn18 is a glycosylation site (N-linked (GlcNAc...) asparagine). Residues 39–58 form a helical membrane-spanning segment; sequence VTVTFFLFLLSTIFNTSFLL. Over 59–77 the chain is Cytoplasmic; that stretch reads KLQNWTQRKEKRKKLSKMK. A helical transmembrane segment spans residues 78-97; sequence VLLKHLTLANLLETLIVMPL. The Extracellular portion of the chain corresponds to 98 to 115; that stretch reads DGMWNITVQWYAGELLCK. Residue Asn102 is glycosylated (N-linked (GlcNAc...) asparagine). Cysteines 114 and 196 form a disulfide. Residues 116–137 traverse the membrane as a helical segment; it reads VLSYLKLFSMYAPAFMMVVISL. Over 138 to 164 the chain is Cytoplasmic; it reads DRSLAITRPLAVKSNSKLGQFMIGLAW. The helical transmembrane segment at 165-184 threads the bilayer; it reads LLSSIFAGPQLYIFGMIHLA. The Extracellular segment spans residues 185-212; sequence DDSGQTEGFSQCVTHCSFPQWWHQAFYN. A helical membrane pass occupies residues 213–232; that stretch reads FFTFSCLFIIPLLIMLICNA. Topologically, residues 233-281 are cytoplasmic; that stretch reads KIIFTLTRVLHQDPHKLQLNQSKNNIPQARLRTLKMTVAFATSFTVCWT. Residues 282–300 form a helical membrane-spanning segment; it reads PYYVLGIWYWFDPDMVNRV. Over 301–306 the chain is Extracellular; it reads SDPVNH. The chain crosses the membrane as a helical span at residues 307 to 326; sequence FFFLFAFLNPCFDPLIYGYF. The Cytoplasmic portion of the chain corresponds to 327-328; it reads SL.

The protein belongs to the G-protein coupled receptor 1 family.

It localises to the cell membrane. In terms of biological role, receptor for gonadotropin releasing hormone (GnRH) that mediates the action of GnRH to stimulate the secretion of the gonadotropic hormones luteinizing hormone (LH) and follicle-stimulating hormone (FSH). This receptor mediates its action by association with G-proteins that activate a phosphatidylinositol-calcium second messenger system. This chain is Gonadotropin-releasing hormone receptor (GNRHR), found in Ovis aries (Sheep).